A 111-amino-acid chain; its full sequence is Probable 4-amino-4-deoxy-L-arabinose-phosphoundecaprenol flippase subunit ArnE (111 aa).

Helical transmembrane passes span 38–58, 61–81, and 89–109; these read LWLGLALICMGAAMVLWLLVL, LPVGIAYPMLSLNFVWVTLAA, and VLPRHWLGVALIISGIIILGS. Residues 40-109 form the EamA domain; it reads LGLALICMGA…IISGIIILGS (70 aa).

It belongs to the ArnE family. In terms of assembly, heterodimer of ArnE and ArnF.

It is found in the cell inner membrane. It functions in the pathway bacterial outer membrane biogenesis; lipopolysaccharide biosynthesis. Translocates 4-amino-4-deoxy-L-arabinose-phosphoundecaprenol (alpha-L-Ara4N-phosphoundecaprenol) from the cytoplasmic to the periplasmic side of the inner membrane. This chain is Probable 4-amino-4-deoxy-L-arabinose-phosphoundecaprenol flippase subunit ArnE, found in Salmonella paratyphi A (strain ATCC 9150 / SARB42).